A 201-amino-acid chain; its full sequence is GTP cyclohydrolase 1 (201 aa).

C90, H93, and C163 together coordinate Zn(2+).

This sequence belongs to the GTP cyclohydrolase I family. In terms of assembly, homomer.

The catalysed reaction is GTP + H2O = 7,8-dihydroneopterin 3'-triphosphate + formate + H(+). Its pathway is cofactor biosynthesis; 7,8-dihydroneopterin triphosphate biosynthesis; 7,8-dihydroneopterin triphosphate from GTP: step 1/1. This Streptomyces griseus subsp. griseus (strain JCM 4626 / CBS 651.72 / NBRC 13350 / KCC S-0626 / ISP 5235) protein is GTP cyclohydrolase 1.